The chain runs to 430 residues: MTTIVNVHAREVLDSRGNPTVEVEVILASGTTGRAIVPSGASTGQFEAVELRDGDKQRYLGKGVLTAVRNVNEVIAEAVVGMDATEQVEVDQAMLALDGTPNKSKLGANAILGVSLATARAAAAELGIPLYRHVGGLTARTLPVPMMNIINGGKHADNNVDMQEFMIFPAGAPSFAESLRMGTEVFHALKSVLKSKGYNTAVGDEGGFAPDLKSNEEAILVILEAIEKAGYKPGQDVFLCMDVASSELFQDGKYVLAGEGNKVLSTEQLIDLWDSWTRQYPIVSIEDGVAEDEWEAWVELTRRIGDRVQLVGDDFFVTNTERLARGIGMNAANAILVKVNQIGTLTETLEAVALAHRNGYSSVMSHRSGETEDTTIADLAVALNCGQIKTGAPSRTDRVAKYNQLLRIEEELGDAAIFAGTSVIRGRKQG.

Gln163 is a binding site for (2R)-2-phosphoglycerate. Residue Glu205 is the Proton donor of the active site. Residues Asp242, Glu286, and Asp313 each coordinate Mg(2+). (2R)-2-phosphoglycerate contacts are provided by Lys338, Arg367, Ser368, and Lys389. The Proton acceptor role is filled by Lys338.

Belongs to the enolase family. The cofactor is Mg(2+).

It is found in the cytoplasm. It localises to the secreted. The protein localises to the cell surface. The enzyme catalyses (2R)-2-phosphoglycerate = phosphoenolpyruvate + H2O. It participates in carbohydrate degradation; glycolysis; pyruvate from D-glyceraldehyde 3-phosphate: step 4/5. Its function is as follows. Catalyzes the reversible conversion of 2-phosphoglycerate (2-PG) into phosphoenolpyruvate (PEP). It is essential for the degradation of carbohydrates via glycolysis. The polypeptide is Enolase (Symbiobacterium thermophilum (strain DSM 24528 / JCM 14929 / IAM 14863 / T)).